We begin with the raw amino-acid sequence, 209 residues long: Molybdenum cofactor guanylyltransferase (209 aa).

GTP is bound by residues 13-15, lysine 26, asparagine 54, aspartate 74, and aspartate 104; that span reads LAG. Aspartate 104 contributes to the Mg(2+) binding site.

This sequence belongs to the MobA family. In terms of assembly, monomer. It depends on Mg(2+) as a cofactor.

It is found in the cytoplasm. It catalyses the reaction Mo-molybdopterin + GTP + H(+) = Mo-molybdopterin guanine dinucleotide + diphosphate. Its function is as follows. Transfers a GMP moiety from GTP to Mo-molybdopterin (Mo-MPT) cofactor (Moco or molybdenum cofactor) to form Mo-molybdopterin guanine dinucleotide (Mo-MGD) cofactor. The chain is Molybdenum cofactor guanylyltransferase from Acinetobacter baumannii (strain ATCC 17978 / DSM 105126 / CIP 53.77 / LMG 1025 / NCDC KC755 / 5377).